A 1263-amino-acid polypeptide reads, in one-letter code: DNA-directed RNA polymerase subunit beta (1263 aa).

The protein belongs to the RNA polymerase beta chain family. The RNAP catalytic core consists of 2 alpha, 1 beta, 1 beta' and 1 omega subunit. When a sigma factor is associated with the core the holoenzyme is formed, which can initiate transcription.

It catalyses the reaction RNA(n) + a ribonucleoside 5'-triphosphate = RNA(n+1) + diphosphate. In terms of biological role, DNA-dependent RNA polymerase catalyzes the transcription of DNA into RNA using the four ribonucleoside triphosphates as substrates. This is DNA-directed RNA polymerase subunit beta from Thermotoga petrophila (strain ATCC BAA-488 / DSM 13995 / JCM 10881 / RKU-1).